Consider the following 583-residue polypeptide: Threonine--tRNA ligase (583 aa).

The interval 185-478 is catalytic; that stretch reads DHRKLGRELN…LVEHYGGAFP (294 aa). Residues cysteine 278, histidine 329, and histidine 455 each contribute to the Zn(2+) site.

Belongs to the class-II aminoacyl-tRNA synthetase family. As to quaternary structure, homodimer. The cofactor is Zn(2+).

It is found in the cytoplasm. The catalysed reaction is tRNA(Thr) + L-threonine + ATP = L-threonyl-tRNA(Thr) + AMP + diphosphate + H(+). Functionally, catalyzes the attachment of threonine to tRNA(Thr) in a two-step reaction: L-threonine is first activated by ATP to form Thr-AMP and then transferred to the acceptor end of tRNA(Thr). Also edits incorrectly charged L-seryl-tRNA(Thr). The chain is Threonine--tRNA ligase from Borrelia recurrentis (strain A1).